Here is a 261-residue protein sequence, read N- to C-terminus: tRNA pseudouridine synthase A (261 aa).

Aspartate 51 serves as the catalytic Nucleophile. Tyrosine 109 is a substrate binding site.

It belongs to the tRNA pseudouridine synthase TruA family. Homodimer.

It carries out the reaction uridine(38/39/40) in tRNA = pseudouridine(38/39/40) in tRNA. Its function is as follows. Formation of pseudouridine at positions 38, 39 and 40 in the anticodon stem and loop of transfer RNAs. The chain is tRNA pseudouridine synthase A from Tolumonas auensis (strain DSM 9187 / NBRC 110442 / TA 4).